Consider the following 273-residue polypeptide: MYRLAAFDMDGTLLMRDHKIGSITLNALHQLADAGVTLTFATGRHYLDMKGILSHSGLNGYLITGNGTRVCDAEGNPLYGMDLPAELVEFVLRTPWQTNASIHLFRDDGWFTDRNDPDLLIAHTTSGFHFQLTEWDELPLTGNHKFCFIASHQELVELKAQLEQQMGGEADFCFSATDCLEVLPRGCNKGVALEKLSHHLDLTLADCMAFGDAMNDKEMLSRVGRGLVMGNALPQLKQELPQLQIIGRCEQQGVAHYLHHWLSSPHLTYSPEF.

Asp-8 (nucleophile) is an active-site residue. Mg(2+)-binding residues include Asp-8, Asp-10, and Asp-212.

This sequence belongs to the HAD-like hydrolase superfamily. Cof family. Requires Mg(2+) as cofactor.

The enzyme catalyses 4-amino-2-methyl-5-(diphosphooxymethyl)pyrimidine + H2O = 4-amino-2-methyl-5-(phosphooxymethyl)pyrimidine + phosphate + H(+). In terms of biological role, catalyzes the hydrolysis of 4-amino-2-methyl-5-hydroxymethylpyrimidine pyrophosphate (HMP-PP) to 4-amino-2-methyl-5-hydroxymethylpyrimidine phosphate (HMP-P). The sequence is that of HMP-PP phosphatase from Yersinia pestis bv. Antiqua (strain Antiqua).